Here is an 80-residue protein sequence, read N- to C-terminus: Cell division protein ZapB (80 aa).

Residues 3–80 are a coiled coil; it reads FEVFEKLEAK…ALLGKMEDVQ (78 aa).

It belongs to the ZapB family. As to quaternary structure, homodimer. The ends of the coiled-coil dimer bind to each other, forming polymers. Interacts with FtsZ.

Its subcellular location is the cytoplasm. Its function is as follows. Non-essential, abundant cell division factor that is required for proper Z-ring formation. It is recruited early to the divisome by direct interaction with FtsZ, stimulating Z-ring assembly and thereby promoting cell division earlier in the cell cycle. Its recruitment to the Z-ring requires functional FtsA or ZipA. This chain is Cell division protein ZapB, found in Photorhabdus laumondii subsp. laumondii (strain DSM 15139 / CIP 105565 / TT01) (Photorhabdus luminescens subsp. laumondii).